The following is a 125-amino-acid chain: Large ribosomal subunit protein bL12 (125 aa).

The protein belongs to the bacterial ribosomal protein bL12 family. In terms of assembly, homodimer. Part of the ribosomal stalk of the 50S ribosomal subunit. Forms a multimeric L10(L12)X complex, where L10 forms an elongated spine to which 2 to 4 L12 dimers bind in a sequential fashion. Binds GTP-bound translation factors.

In terms of biological role, forms part of the ribosomal stalk which helps the ribosome interact with GTP-bound translation factors. Is thus essential for accurate translation. The chain is Large ribosomal subunit protein bL12 from Nitrobacter winogradskyi (strain ATCC 25391 / DSM 10237 / CIP 104748 / NCIMB 11846 / Nb-255).